Reading from the N-terminus, the 389-residue chain is MARFFPLTLTILLFFIQRIDFCHTLVPANETFKFVNEGELGQYISEYFGDYRPLDPFTSPFQLCFYNQTPTAFTLALRMGLRRTESLMRWVWEANRGNPVDENATLTFGPDGNLVLARSNGQVAWQTSTANKGVVGLKILPNGNMVLYDSKGKFLWQSFDTPTDTLLVGQSLKMGAVTKLVSRASPGENVNGPYSLVMEPKGLHLYYKPTTSPKPIRYYSFSLFTKLNKNESLQNVTFEFENENDQGFAFLLSLKYGTSNSLGGASILNRIKYNTTLSFLRLEIDGNVKIYTYNDKVDYGAWEVTYTLFLKAPPPLFQVSLAATESESSECQLPKKCGNFGLCEESQCVGCPTSSGPVLAWSKTCEPPKLSSCGPKDFHYNKLGGWITT.

The N-terminal stretch at 1-24 (MARFFPLTLTILLFFIQRIDFCHT) is a signal peptide. N29 carries N-linked (GlcNAc...) (complex) asparagine glycosylation. The region spanning 88–193 (MRWVWEANRG…ASPGENVNGP (106 aa)) is the Bulb-type lectin domain. 3 N-linked (GlcNAc...) asparagine glycosylation sites follow: N103, N230, and N235. N274 carries N-linked (GlcNAc...) (high mannose) asparagine glycosylation.

In terms of tissue distribution, in 14-day old seedlings, expressed in the epidermis and apical dome of the shoot and in the hypocotyl, cotyledon and epidermis of the root. In developing seeds, expressed in both the inner and outer epidermis of the integument.

It is found in the secreted. Functionally, may be involved in the limitation of water flow through the outer epidermal cell wall, either by direct modification of wall structure or as a signal instructing the protoplast to restrict water transport across the cell wall. This is Epidermis-specific secreted glycoprotein EP1 (EP1) from Daucus carota (Wild carrot).